Consider the following 106-residue polypeptide: MSCQQNQQQCQPPPKCPPKCPPKCPPKCRPQCPAPCPPPVSSCCGPSSGGCCGSSSGGCCSSGGGGCCLSHHRPRLFHRHRHQSPDCCECEPSGGSGCCHSSGDCC.

Positions methionine 1–cysteine 10 are enriched in low complexity. The disordered stretch occupies residues methionine 1 to proline 25. The span at glutamine 11–proline 25 shows a compositional bias: pro residues.

It belongs to the LCE family. Interacts with CYSRT1. Skin-specific. Expression was readily detected in adult trunk skin, adult arm skin, fetal skin, penal skin, vulva, esophagus and tongue. Not expressed in the cervix, rectum, lung, colon, or placenta.

Precursors of the cornified envelope of the stratum corneum. The sequence is that of Late cornified envelope protein 2A (LCE2A) from Homo sapiens (Human).